A 215-amino-acid polypeptide reads, in one-letter code: UPF0323 lipoprotein HP_0232 (215 aa).

The N-terminal stretch at 1 to 27 (MKKPYRKISDYAIVGGLSALVMVSIVG) is a signal peptide. Residue C28 is the site of N-palmitoyl cysteine attachment. C28 carries the S-diacylglycerol cysteine lipid modification. Positions 158–169 (QRTYKSPQAYQR) are enriched in polar residues. The segment at 158–215 (QRTYKSPQAYQRSQNSFSKSAPSASSMGGASKGQSGFFGSSRPTSSPAVSSGTRGFNS) is disordered. Positions 170-208 (SQNSFSKSAPSASSMGGASKGQSGFFGSSRPTSSPAVSS) are enriched in low complexity.

It belongs to the UPF0323 family.

The protein localises to the cell membrane. In Helicobacter pylori (strain ATCC 700392 / 26695) (Campylobacter pylori), this protein is UPF0323 lipoprotein HP_0232.